Reading from the N-terminus, the 272-residue chain is Formamidopyrimidine-DNA glycosylase (272 aa).

Pro2 serves as the catalytic Schiff-base intermediate with DNA. The active-site Proton donor is the Glu3. The active-site Proton donor; for beta-elimination activity is Lys57. Positions 90, 109, and 150 each coordinate DNA. The segment at 235–269 (HVYGRAKKKCLLCSSIIQEEKIGQRNTFWCGHCQP) adopts an FPG-type zinc-finger fold. Arg259 (proton donor; for delta-elimination activity) is an active-site residue.

Belongs to the FPG family. Monomer. Requires Zn(2+) as cofactor.

It carries out the reaction Hydrolysis of DNA containing ring-opened 7-methylguanine residues, releasing 2,6-diamino-4-hydroxy-5-(N-methyl)formamidopyrimidine.. It catalyses the reaction 2'-deoxyribonucleotide-(2'-deoxyribose 5'-phosphate)-2'-deoxyribonucleotide-DNA = a 3'-end 2'-deoxyribonucleotide-(2,3-dehydro-2,3-deoxyribose 5'-phosphate)-DNA + a 5'-end 5'-phospho-2'-deoxyribonucleoside-DNA + H(+). Its function is as follows. Involved in base excision repair of DNA damaged by oxidation or by mutagenic agents. Acts as a DNA glycosylase that recognizes and removes damaged bases. Has a preference for oxidized purines, such as 7,8-dihydro-8-oxoguanine (8-oxoG). Has AP (apurinic/apyrimidinic) lyase activity and introduces nicks in the DNA strand. Cleaves the DNA backbone by beta-delta elimination to generate a single-strand break at the site of the removed base with both 3'- and 5'-phosphates. The sequence is that of Formamidopyrimidine-DNA glycosylase from Aliivibrio fischeri (strain ATCC 700601 / ES114) (Vibrio fischeri).